The chain runs to 424 residues: Tyrosine--tRNA ligase (424 aa).

Tyrosine 33 is an L-tyrosine binding site. The 'HIGH' region motif lies at 38 to 47 (PSADSLHIGH). Tyrosine 170 and glutamine 174 together coordinate L-tyrosine. A 'KMSKS' region motif is present at residues 230–234 (KFGKT). An ATP-binding site is contributed by lysine 233. The region spanning 357–424 (MSLIDALVRC…RRHYHLIRLV (68 aa)) is the S4 RNA-binding domain.

It belongs to the class-I aminoacyl-tRNA synthetase family. TyrS type 1 subfamily. Homodimer.

It is found in the cytoplasm. It catalyses the reaction tRNA(Tyr) + L-tyrosine + ATP = L-tyrosyl-tRNA(Tyr) + AMP + diphosphate + H(+). Functionally, catalyzes the attachment of tyrosine to tRNA(Tyr) in a two-step reaction: tyrosine is first activated by ATP to form Tyr-AMP and then transferred to the acceptor end of tRNA(Tyr). The protein is Tyrosine--tRNA ligase of Roseiflexus castenholzii (strain DSM 13941 / HLO8).